Here is a 506-residue protein sequence, read N- to C-terminus: Probable Xaa-Pro aminopeptidase BDCG_04966 (506 aa).

Mn(2+) is bound by residues aspartate 285, aspartate 296, glutamate 433, and glutamate 471.

The protein belongs to the peptidase M24B family. It depends on Mn(2+) as a cofactor.

It catalyses the reaction Release of any N-terminal amino acid, including proline, that is linked to proline, even from a dipeptide or tripeptide.. Catalyzes the removal of a penultimate prolyl residue from the N-termini of peptides. This chain is Probable Xaa-Pro aminopeptidase BDCG_04966, found in Ajellomyces dermatitidis (strain ER-3 / ATCC MYA-2586) (Blastomyces dermatitidis).